The chain runs to 586 residues: A-type ATP synthase subunit A (586 aa).

ATP is bound at residue 232–239 (GPFGSGKT).

Belongs to the ATPase alpha/beta chains family. In terms of assembly, has multiple subunits with at least A(3), B(3), C, D, E, F, H, I and proteolipid K(x).

Its subcellular location is the cell membrane. It catalyses the reaction ATP + H2O + 4 H(+)(in) = ADP + phosphate + 5 H(+)(out). Component of the A-type ATP synthase that produces ATP from ADP in the presence of a proton gradient across the membrane. The A chain is the catalytic subunit. The polypeptide is A-type ATP synthase subunit A (Methanococcus maripaludis (strain DSM 14266 / JCM 13030 / NBRC 101832 / S2 / LL)).